A 344-amino-acid polypeptide reads, in one-letter code: Arginine N-succinyltransferase (344 aa).

Leucine 125 lines the succinyl-CoA pocket. Histidine 229 (proton donor) is an active-site residue.

Belongs to the arginine N-succinyltransferase family.

It catalyses the reaction succinyl-CoA + L-arginine = N(2)-succinyl-L-arginine + CoA + H(+). Its pathway is amino-acid degradation; L-arginine degradation via AST pathway; L-glutamate and succinate from L-arginine: step 1/5. Catalyzes the transfer of succinyl-CoA to arginine to produce N(2)-succinylarginine. The chain is Arginine N-succinyltransferase from Shigella dysenteriae serotype 1 (strain Sd197).